The sequence spans 305 residues: Acetyl-coenzyme A carboxylase carboxyl transferase subunit beta (305 aa).

The 270-residue stretch at 27–296 folds into the CoA carboxyltransferase N-terminal domain; sequence LWVKCSSCRE…SPAKAELAGR (270 aa). Zn(2+) contacts are provided by Cys31, Cys34, Cys50, and Cys53. A C4-type zinc finger spans residues 31–53; that stretch reads CSSCRELIYKKQLNDNLKVCPKC.

It belongs to the AccD/PCCB family. In terms of assembly, acetyl-CoA carboxylase is a heterohexamer composed of biotin carboxyl carrier protein (AccB), biotin carboxylase (AccC) and two subunits each of ACCase subunit alpha (AccA) and ACCase subunit beta (AccD). Requires Zn(2+) as cofactor.

It is found in the cytoplasm. The catalysed reaction is N(6)-carboxybiotinyl-L-lysyl-[protein] + acetyl-CoA = N(6)-biotinyl-L-lysyl-[protein] + malonyl-CoA. It functions in the pathway lipid metabolism; malonyl-CoA biosynthesis; malonyl-CoA from acetyl-CoA: step 1/1. Component of the acetyl coenzyme A carboxylase (ACC) complex. Biotin carboxylase (BC) catalyzes the carboxylation of biotin on its carrier protein (BCCP) and then the CO(2) group is transferred by the transcarboxylase to acetyl-CoA to form malonyl-CoA. In Chloroflexus aurantiacus (strain ATCC 29366 / DSM 635 / J-10-fl), this protein is Acetyl-coenzyme A carboxylase carboxyl transferase subunit beta.